The following is a 149-amino-acid chain: Transcriptional repressor NrdR (149 aa).

A zinc finger spans residues cysteine 3–cysteine 34. An ATP-cone domain is found at proline 49 to glutamate 139.

This sequence belongs to the NrdR family. Zn(2+) is required as a cofactor.

Negatively regulates transcription of bacterial ribonucleotide reductase nrd genes and operons by binding to NrdR-boxes. This is Transcriptional repressor NrdR from Shewanella pealeana (strain ATCC 700345 / ANG-SQ1).